A 333-amino-acid chain; its full sequence is Glyoxylate reductase (333 aa).

Residues 158 to 161 (FGRI), 180 to 182 (SRS), and 239 to 241 (IAR) each bind NADP(+). Active-site residues include arginine 241 and glutamate 270. Residue histidine 288 is the Proton donor of the active site. 288–290 (HIG) provides a ligand contact to NADP(+).

Belongs to the D-isomer specific 2-hydroxyacid dehydrogenase family. GyaR subfamily. In terms of assembly, homodimer.

It localises to the cytoplasm. The catalysed reaction is glycolate + NAD(+) = glyoxylate + NADH + H(+). In Thermococcus kodakarensis (strain ATCC BAA-918 / JCM 12380 / KOD1) (Pyrococcus kodakaraensis (strain KOD1)), this protein is Glyoxylate reductase.